The primary structure comprises 765 residues: 5-methyltetrahydropteroyltriglutamate--homocysteine methyltransferase (765 aa).

5-methyltetrahydropteroyltri-L-glutamate contacts are provided by residues 18 to 21 (REWK) and Lys-114. Residues 437–439 (IGS) and Glu-490 each bind L-homocysteine. L-methionine contacts are provided by residues 437–439 (IGS) and Glu-490. Trp-567 is a binding site for 5-methyltetrahydropteroyltri-L-glutamate. Asp-605 serves as a coordination point for L-homocysteine. Asp-605 serves as a coordination point for L-methionine. Glu-611 is a binding site for 5-methyltetrahydropteroyltri-L-glutamate. Residues His-647, Cys-649, and Glu-671 each contribute to the Zn(2+) site. His-700 functions as the Proton donor in the catalytic mechanism. Residue Cys-732 coordinates Zn(2+).

Belongs to the vitamin-B12 independent methionine synthase family. It depends on Zn(2+) as a cofactor.

The catalysed reaction is 5-methyltetrahydropteroyltri-L-glutamate + L-homocysteine = tetrahydropteroyltri-L-glutamate + L-methionine. Its pathway is amino-acid biosynthesis; L-methionine biosynthesis via de novo pathway; L-methionine from L-homocysteine (MetE route): step 1/1. Functionally, catalyzes the transfer of a methyl group from 5-methyltetrahydrofolate to homocysteine resulting in methionine formation. This chain is 5-methyltetrahydropteroyltriglutamate--homocysteine methyltransferase, found in Listeria monocytogenes serotype 4b (strain F2365).